Consider the following 54-residue polypeptide: uncharacterized protein (54 aa).

The interval Asn34–Phe54 is disordered.

This is an uncharacterized protein from Acidianus two-tailed virus (ATV).